Here is a 337-residue protein sequence, read N- to C-terminus: MGKTSRDKRDIYYRLAKENKWRARSAFKLMQIDDEFQILKGVRRAVDLCAAPGSWSQVLSKRLYEEDQEAKIVAIDLQPMAPIPGVIQLQGDITSVDTANQVIKHFSGEKSDIVICDGAPDVTGIHSLDEFMQAELILAAFNITSHVLKEGGNFLAKIFRSRNSSLLYAQMKKYFKKVYLAKPRSSRQSSCEAFVLCLDYSPPEGFVPTMGKTSLDATDASAISPDIIDGFVTCGDLSGWDSEKSYPLDIDACFPKGEIDEEQKKRYEFKDVVQPPTDPAYKAALDKKKSGVFAKMSADLNRQLKAELSRGKDQKKTPAENVPSVEELEKAAEKFQL.

Positions 53, 55, 76, 92, and 117 each coordinate S-adenosyl-L-methionine. K157 (proton acceptor) is an active-site residue. Composition is skewed to basic and acidic residues over residues 304–318 (LKAE…KKTP) and 327–337 (ELEKAAEKFQL). The interval 304–337 (LKAELSRGKDQKKTPAENVPSVEELEKAAEKFQL) is disordered.

The protein belongs to the class I-like SAM-binding methyltransferase superfamily. RNA methyltransferase RlmE family. TRM7 subfamily.

Its subcellular location is the cytoplasm. The enzyme catalyses cytidine(32)/guanosine(34) in tRNA + 2 S-adenosyl-L-methionine = 2'-O-methylcytidine(32)/2'-O-methylguanosine(34) in tRNA + 2 S-adenosyl-L-homocysteine + 2 H(+). Methylates the 2'-O-ribose of nucleotides at positions 32 and 34 of the tRNA anticodon loop of substrate tRNAs. The sequence is that of Putative tRNA (cytidine(32)/guanosine(34)-2'-O)-methyltransferase from Caenorhabditis elegans.